A 35-amino-acid polypeptide reads, in one-letter code: Alpha-amanitin proprotein 1 (35 aa).

Positions 1 to 10 (MSDINATRLP) are excised as a propeptide. At Ile11 the chain carries (3R,4R)-4,5-dihydroxyisoleucine; in form alpha-amanitin. Ile11 is modified ((3R,4S)-4-hydroxyisoleucine; in form gamma-amanitin). The cyclopeptide (Ile-Pro) cross-link spans 11-18 (IWGIGCNP). The segment at residues 12–16 (WGIGC) is a cross-link (2'-cysteinyl-6'-hydroxytryptophan sulfoxide (Trp-Cys)). At Pro18 the chain carries 4-hydroxyproline. A propeptide spanning residues 19-35 (CVGDDVTSVLTRGEALC) is cleaved from the precursor.

This sequence belongs to the MSDIN fungal toxin family. In terms of processing, processed by the macrocyclase-peptidase enzyme POPB to yield a toxic cyclic octapeptide. POPB first removes 10 residues from the N-terminus. Conformational trapping of the remaining peptide forces the enzyme to release this intermediate rather than proceed to macrocyclization. The enzyme rebinds the remaining peptide in a different conformation and catalyzes macrocyclization of the N-terminal 8 residues. As to expression, expressed in basidiocarps.

In terms of biological role, major toxin belonging to the bicyclic octapeptides amatoxins that acts by binding non-competitively to RNA polymerase II and greatly slowing the elongation of transcripts from target promoters. The sequence is that of Alpha-amanitin proprotein 1 from Amanita exitialis (Guangzhou destroying angel).